Here is a 254-residue protein sequence, read N- to C-terminus: NADPH-dependent ferric-chelate reductase (254 aa).

Residues 15–136 (LRFRELTVLR…AGPRGSLVVP (122 aa)) form the FAD-binding FR-type domain.

This sequence belongs to the SIP oxidoreductase family.

The protein localises to the cytoplasm. It catalyses the reaction 2 a Fe(II)-siderophore + NADP(+) + H(+) = 2 a Fe(III)-siderophore + NADPH. Plays a role in iron homeostasis under excess nickel conditions. The polypeptide is NADPH-dependent ferric-chelate reductase (yqjH) (Escherichia coli (strain K12)).